The sequence spans 95 residues: Small ribosomal subunit protein uS19 (95 aa).

Belongs to the universal ribosomal protein uS19 family.

Functionally, protein S19 forms a complex with S13 that binds strongly to the 16S ribosomal RNA. The protein is Small ribosomal subunit protein uS19 of Lactobacillus gasseri (strain ATCC 33323 / DSM 20243 / BCRC 14619 / CIP 102991 / JCM 1131 / KCTC 3163 / NCIMB 11718 / NCTC 13722 / AM63).